The following is a 239-amino-acid chain: MTEVIETKEVENIISEQSLKTESVKVSNKRSRDDEEMKDSEGGVKKTSFPQISVEDTEEEQIRKVTIPFNRIAPLKANWQQIYEPIVTHLKLQIRMNTKTRKVELKTSKSTKETSALQKAADFVHAFSLGFEVNDAVAILRLDDLYIDSFDVEDVKILKGDNLSRAIGRVAGKDGKTKFTIENVTKTRIVLADKRIHILGSYSNIRVAKDAICDLIIGSPPGKVYAKLRTVSSRIAERF.

Residues 21–45 (TESVKVSNKRSRDDEEMKDSEGGVK) are disordered. Positions 30 to 44 (RSRDDEEMKDSEGGV) are enriched in basic and acidic residues. The KH domain occupies 160–212 (GDNLSRAIGRVAGKDGKTKFTIENVTKTRIVLADKRIHILGSYSNIRVAKDAI).

Belongs to the PNO1 family. In terms of assembly, part of the small subunit (SSU) processome, composed of more than 70 proteins and the RNA chaperone small nucleolar RNA (snoRNA) U3.

Its subcellular location is the nucleus. The protein resides in the nucleolus. Its function is as follows. Part of the small subunit (SSU) processome, first precursor of the small eukaryotic ribosomal subunit. During the assembly of the SSU processome in the nucleolus, many ribosome biogenesis factors, an RNA chaperone and ribosomal proteins associate with the nascent pre-rRNA and work in concert to generate RNA folding, modifications, rearrangements and cleavage as well as targeted degradation of pre-ribosomal RNA by the RNA exosome. Positively regulates dimethylation of two adjacent adenosines in the loop of a conserved hairpin near the 3'-end of 18S rRNA. The polypeptide is RNA-binding protein pno1 (pno1) (Dictyostelium discoideum (Social amoeba)).